We begin with the raw amino-acid sequence, 400 residues long: Homoserine O-acetyltransferase (400 aa).

The disordered stretch occupies residues 1–22; it reads MMNVHPVKGPVATGGERPHEAD. An AB hydrolase-1 domain is found at 64 to 374; the sequence is NAILVCHALT…DKGHDAFLLD (311 aa). S169 serves as the catalytic Nucleophile. Residue R239 participates in substrate binding. Active-site residues include D335 and H368. A substrate-binding site is contributed by D369.

The protein belongs to the AB hydrolase superfamily. MetX family. As to quaternary structure, homodimer.

The protein localises to the cytoplasm. It carries out the reaction L-homoserine + acetyl-CoA = O-acetyl-L-homoserine + CoA. It functions in the pathway amino-acid biosynthesis; L-methionine biosynthesis via de novo pathway; O-acetyl-L-homoserine from L-homoserine: step 1/1. Its function is as follows. Transfers an acetyl group from acetyl-CoA to L-homoserine, forming acetyl-L-homoserine. This chain is Homoserine O-acetyltransferase, found in Rhodopseudomonas palustris (strain HaA2).